The chain runs to 473 residues: 3-isopropylmalate dehydratase large subunit (473 aa).

[4Fe-4S] cluster contacts are provided by cysteine 349, cysteine 409, and cysteine 412.

The protein belongs to the aconitase/IPM isomerase family. LeuC type 1 subfamily. As to quaternary structure, heterodimer of LeuC and LeuD. The cofactor is [4Fe-4S] cluster.

It catalyses the reaction (2R,3S)-3-isopropylmalate = (2S)-2-isopropylmalate. The protein operates within amino-acid biosynthesis; L-leucine biosynthesis; L-leucine from 3-methyl-2-oxobutanoate: step 2/4. In terms of biological role, catalyzes the isomerization between 2-isopropylmalate and 3-isopropylmalate, via the formation of 2-isopropylmaleate. The sequence is that of 3-isopropylmalate dehydratase large subunit from Gloeobacter violaceus (strain ATCC 29082 / PCC 7421).